Consider the following 134-residue polypeptide: MNTAYRVWDGEQMHYWDDEGLSLIIKSNGDWTLKRLYTDVLVPVVDSTNRNAALMWGAKVRGKFIYDRSIVKITSDDKESSDVCEVKFSDGVFQVDVSKISADYDVTAVGWVEYATIEVIGDVYQNPELLEGVK.

As to quaternary structure, homodimer.

In Bacillus subtilis (strain 168), this protein is SPbeta prophage-derived uncharacterized protein YopX (yopX).